We begin with the raw amino-acid sequence, 221 residues long: Large ribosomal subunit protein uL4 (221 aa).

Positions 46 to 74 (AGTASTKTRSEVSGGGRKPWPQKHTGRAR) are disordered.

It belongs to the universal ribosomal protein uL4 family. As to quaternary structure, part of the 50S ribosomal subunit.

Functionally, one of the primary rRNA binding proteins, this protein initially binds near the 5'-end of the 23S rRNA. It is important during the early stages of 50S assembly. It makes multiple contacts with different domains of the 23S rRNA in the assembled 50S subunit and ribosome. Forms part of the polypeptide exit tunnel. The chain is Large ribosomal subunit protein uL4 from Petrotoga mobilis (strain DSM 10674 / SJ95).